The sequence spans 203 residues: Ras-related protein Rab-8B (203 aa).

GTP contacts are provided by residues 22-29 (GDSGVGKS), 70-74 (DTAGQ), and 128-131 (NKCD). Residues C202 and C203 are each lipidated (S-geranylgeranyl cysteine).

This sequence belongs to the small GTPase superfamily. Rab family.

Its subcellular location is the cell membrane. Protein transport. Probably involved in vesicular traffic. The sequence is that of Ras-related protein Rab-8B (rab8B) from Dictyostelium discoideum (Social amoeba).